The chain runs to 81 residues: Cell division protein ZapB (81 aa).

Residues 6-80 (EVFEKLEAKV…LQALLGRMEE (75 aa)) adopt a coiled-coil conformation. Polar residues predominate over residues 38 to 47 (SLAQDVQSAQ). The interval 38–67 (SLAQDVQSAQHQREELERENNHLKEQQSGW) is disordered. The segment covering 48–62 (HQREELERENNHLKE) has biased composition (basic and acidic residues).

It belongs to the ZapB family. As to quaternary structure, homodimer. The ends of the coiled-coil dimer bind to each other, forming polymers. Interacts with FtsZ.

The protein resides in the cytoplasm. Its function is as follows. Non-essential, abundant cell division factor that is required for proper Z-ring formation. It is recruited early to the divisome by direct interaction with FtsZ, stimulating Z-ring assembly and thereby promoting cell division earlier in the cell cycle. Its recruitment to the Z-ring requires functional FtsA or ZipA. The sequence is that of Cell division protein ZapB from Citrobacter koseri (strain ATCC BAA-895 / CDC 4225-83 / SGSC4696).